The sequence spans 1287 residues: DENN domain-containing protein 5A (1287 aa).

The uDENN domain occupies S57–S259. S193 is modified (phosphoserine). One can recognise a cDENN domain in the interval E278–I414. Residues M416 to D598 form the dDENN domain. Residues V787–T950 form the RUN 1 domain. One can recognise a PLAT domain in the interval I954 to V1062. Position 1079 is a phosphothreonine (T1079). S1085, S1087, and S1096 each carry phosphoserine. Positions T1134–S1280 constitute an RUN 2 domain.

This sequence belongs to the RAB6IP1 family. In terms of assembly, interacts with RAB6A bound to GTP. In terms of tissue distribution, expressed in developing brain and developing neurons.

It localises to the golgi apparatus membrane. Functionally, guanine nucleotide exchange factor (GEF) which may activate RAB6A and RAB39A and/or RAB39B. Promotes the exchange of GDP to GTP, converting inactive GDP-bound Rab proteins into their active GTP-bound form. Involved in the negative regulation of neurite outgrowth. This is DENN domain-containing protein 5A (Dennd5a) from Rattus norvegicus (Rat).